The following is a 34-amino-acid chain: Photosystem II reaction center protein M (34 aa).

The chain crosses the membrane as a helical span at residues 5-25 (ILAFIATTLFVLVPTAFLLII).

This sequence belongs to the PsbM family. PSII is composed of 1 copy each of membrane proteins PsbA, PsbB, PsbC, PsbD, PsbE, PsbF, PsbH, PsbI, PsbJ, PsbK, PsbL, PsbM, PsbT, PsbX, PsbY, PsbZ, Psb30/Ycf12, at least 3 peripheral proteins of the oxygen-evolving complex and a large number of cofactors. It forms dimeric complexes.

It is found in the plastid. It localises to the chloroplast thylakoid membrane. Functionally, one of the components of the core complex of photosystem II (PSII). PSII is a light-driven water:plastoquinone oxidoreductase that uses light energy to abstract electrons from H(2)O, generating O(2) and a proton gradient subsequently used for ATP formation. It consists of a core antenna complex that captures photons, and an electron transfer chain that converts photonic excitation into a charge separation. This subunit is found at the monomer-monomer interface. This chain is Photosystem II reaction center protein M, found in Citrus sinensis (Sweet orange).